The chain runs to 95 residues: Aspartyl/glutamyl-tRNA(Asn/Gln) amidotransferase subunit C (95 aa).

Belongs to the GatC family. As to quaternary structure, heterotrimer of A, B and C subunits.

The enzyme catalyses L-glutamyl-tRNA(Gln) + L-glutamine + ATP + H2O = L-glutaminyl-tRNA(Gln) + L-glutamate + ADP + phosphate + H(+). It catalyses the reaction L-aspartyl-tRNA(Asn) + L-glutamine + ATP + H2O = L-asparaginyl-tRNA(Asn) + L-glutamate + ADP + phosphate + 2 H(+). In terms of biological role, allows the formation of correctly charged Asn-tRNA(Asn) or Gln-tRNA(Gln) through the transamidation of misacylated Asp-tRNA(Asn) or Glu-tRNA(Gln) in organisms which lack either or both of asparaginyl-tRNA or glutaminyl-tRNA synthetases. The reaction takes place in the presence of glutamine and ATP through an activated phospho-Asp-tRNA(Asn) or phospho-Glu-tRNA(Gln). This is Aspartyl/glutamyl-tRNA(Asn/Gln) amidotransferase subunit C from Halothermothrix orenii (strain H 168 / OCM 544 / DSM 9562).